A 100-amino-acid polypeptide reads, in one-letter code: Urease subunit gamma (100 aa).

It belongs to the urease gamma subunit family. As to quaternary structure, heterotrimer of UreA (gamma), UreB (beta) and UreC (alpha) subunits. Three heterotrimers associate to form the active enzyme.

Its subcellular location is the cytoplasm. The catalysed reaction is urea + 2 H2O + H(+) = hydrogencarbonate + 2 NH4(+). The protein operates within nitrogen metabolism; urea degradation; CO(2) and NH(3) from urea (urease route): step 1/1. The sequence is that of Urease subunit gamma from Yersinia bercovieri.